The sequence spans 634 residues: DNA-directed RNA polymerase subunit gamma (634 aa).

Zn(2+)-binding residues include cysteine 74, cysteine 76, cysteine 89, and cysteine 92. Residues aspartate 471, aspartate 473, and aspartate 475 each contribute to the Mg(2+) site.

It belongs to the RNA polymerase beta' chain family. RpoC1 subfamily. In terms of assembly, in cyanobacteria the RNAP catalytic core is composed of 2 alpha, 1 beta, 1 beta', 1 gamma and 1 omega subunit. When a sigma factor is associated with the core the holoenzyme is formed, which can initiate transcription. Requires Mg(2+) as cofactor. The cofactor is Zn(2+).

The enzyme catalyses RNA(n) + a ribonucleoside 5'-triphosphate = RNA(n+1) + diphosphate. Its function is as follows. DNA-dependent RNA polymerase catalyzes the transcription of DNA into RNA using the four ribonucleoside triphosphates as substrates. This is DNA-directed RNA polymerase subunit gamma from Prochlorococcus marinus (strain MIT 9313).